Consider the following 416-residue polypeptide: MVMDEEKQAIVSSSSSSQRKRRYKKLMIASSSLPDDVVEEIFLKLPVKALMRFKSLSKQWRSTLESCYFSQRHLKIAERSHVDHPKVMIITEKWNPDIEISFRTISLESVSFLSSALFNFPRGFHHPIYASESCDGIFCIHSPKTQDIYVVNPATRWFRQLPPARFQIFMHKLNPTLDTLRDMIPVNHLAFVKATDYKLVWLYNSDASRVTKCEVFDFKANAWRYLTCIPSYRIYHDQKPASANGTLYWFTETYNAEIKVIALDIHTEIFRLLPKPSLIASSEPSHIDMCIIDNSLCMYETEGDKKIIQEIWRLKSSEDAWEKIYTINLLSSSYCHFHVLDGYNLTRLCYWTQKDLVESSTPVAIYKDKKIILSHRYTCNLGKRLEVLELHAKLSNIPCPKASICKRDALLVHRAI.

The region spanning 27–76 is the F-box domain; the sequence is MIASSSLPDDVVEEIFLKLPVKALMRFKSLSKQWRSTLESCYFSQRHLKI. Kelch repeat units lie at residues 199 to 243 and 297 to 341; these read LVWL…PASA and CMYE…HVLD.

The polypeptide is Putative F-box/kelch-repeat protein At1g12870 (Arabidopsis thaliana (Mouse-ear cress)).